The chain runs to 200 residues: Sperm acrosome developmental regulator (200 aa).

Residue serine 63 is modified to Phosphoserine. Residues 167 to 183 (QERRRRRRMRSHASHTS) show a composition bias toward basic residues. The interval 167–200 (QERRRRRRMRSHASHTSRHSESVQGLKHDARSPL) is disordered. Positions 184–200 (RHSESVQGLKHDARSPL) are enriched in basic and acidic residues.

It is found in the cytoplasmic vesicle. Its subcellular location is the secretory vesicle. It localises to the acrosome. May play an important role in acrosome formation and nucleus shaping during spermiogenesis. The polypeptide is Sperm acrosome developmental regulator (Spacdr) (Rattus norvegicus (Rat)).